Reading from the N-terminus, the 615-residue chain is UvrABC system protein C (615 aa).

Residues 12 to 91 (EKPGVYIMKD…IKKYKPKYNV (80 aa)) enclose the GIY-YIG domain. The UVR domain maps to 203–238 (DWLIQKLKEDMKKAAEELRFEEAARIRDQIFAIERT).

It belongs to the UvrC family. In terms of assembly, interacts with UvrB in an incision complex.

The protein localises to the cytoplasm. In terms of biological role, the UvrABC repair system catalyzes the recognition and processing of DNA lesions. UvrC both incises the 5' and 3' sides of the lesion. The N-terminal half is responsible for the 3' incision and the C-terminal half is responsible for the 5' incision. The sequence is that of UvrABC system protein C from Thermoanaerobacter sp. (strain X514).